A 361-amino-acid chain; its full sequence is 5-formaminoimidazole-4-carboxamide-1-(beta)-D-ribofuranosyl 5'-monophosphate synthetase (361 aa).

H27 and S94 together coordinate 5-amino-1-(5-phospho-beta-D-ribosyl)imidazole-4-carboxamide. Residues 116–348 (RQILRWEAER…MGQRIAKEIK (233 aa)) enclose the ATP-grasp domain. Residues 146–208 (PDEI…TNYC) and E230 each bind ATP. N258 provides a ligand contact to 5-amino-1-(5-phospho-beta-D-ribosyl)imidazole-4-carboxamide. Mg(2+)-binding residues include Q297 and E310.

This sequence belongs to the phosphohexose mutase family. The cofactor is Mg(2+). It depends on Mn(2+) as a cofactor.

It catalyses the reaction 5-amino-1-(5-phospho-beta-D-ribosyl)imidazole-4-carboxamide + formate + ATP = 5-formamido-1-(5-phospho-D-ribosyl)imidazole-4-carboxamide + ADP + phosphate. It functions in the pathway purine metabolism; IMP biosynthesis via de novo pathway; 5-formamido-1-(5-phospho-D-ribosyl)imidazole-4-carboxamide from 5-amino-1-(5-phospho-D-ribosyl)imidazole-4-carboxamide (formate route): step 1/1. Catalyzes the ATP- and formate-dependent formylation of 5-aminoimidazole-4-carboxamide-1-beta-d-ribofuranosyl 5'-monophosphate (AICAR) to 5-formaminoimidazole-4-carboxamide-1-beta-d-ribofuranosyl 5'-monophosphate (FAICAR) in the absence of folates. In Methanococcus aeolicus (strain ATCC BAA-1280 / DSM 17508 / OCM 812 / Nankai-3), this protein is 5-formaminoimidazole-4-carboxamide-1-(beta)-D-ribofuranosyl 5'-monophosphate synthetase.